The sequence spans 606 residues: MSINFLSIPRNRFKAIGVLSVTCILIYVILHSSIITTDFDVSDYGDKFIPSIIFDDNNDNGENLKDPQPELDNDKGNGETDTTTSNSMTTAHTFWKGIFDTFDKYKMDLGQDPENAVSYVDKLKQKQGPLNKEVLLSKAIVSSELMKHLKEKHSGVVEDLPSVMPGSVYNKGSKGVVIIGGGKFSWLAYLALVQLRNVGSKLPVEIVMPSRADYEKELEFCENTLPEMQASCVVLPDVLGEAVMKNRKFASYQFKALALVVTSFEHILLLDSDNMIVSNPDEIFESKLYHQYGMITWPDYWKRTISPLFYDVAEIEVNENKRVRYNRFPLYNAPNVRSNIYTDQEREEVPFHDLQGSIAELSTESGQLIINKHTHGKTILLALYYNFYGPNLFYKLFSLGEQGEGDKDTFVAAAVVTRQDYYQVKSFIKTFGYADSDDKFQGVSMGQRNPLIDRKHYEDHVLALLEKDSFKSSSIADQIEQMKKFENEDFDQHNSIPLFTVHCNYPKLDPKLYMSRDDLYDEKEKKLKYRLYGNLKYTKEVVKDGETGTEASTDKVQIDFELQQWQHMQDILCLKKIYFTHFIDNDMNELCQFIENQVAWLSKSQN.

Topologically, residues 1–14 (MSINFLSIPRNRFK) are cytoplasmic. Residues 15 to 35 (AIGVLSVTCILIYVILHSSII) form a helical membrane-spanning segment. The Extracellular portion of the chain corresponds to 36–606 (TTDFDVSDYG…QVAWLSKSQN (571 aa)). The tract at residues 59–86 (DNGENLKDPQPELDNDKGNGETDTTTSN) is disordered. Residues 62–78 (ENLKDPQPELDNDKGNG) are compositionally biased toward basic and acidic residues.

The protein belongs to the MNN1/MNT family.

It is found in the golgi apparatus membrane. The protein operates within protein modification; protein glycosylation. Its function is as follows. Alpha-1,2-mannosyltransferase required for cell wall integrity. Responsible for addition of the first alpha-1,2-linked mannose to form the branches on the mannan backbone of oligosaccharides. Addition of alpha-1,2-mannose is required for stabilization of the alpha-1,6-mannose backbone and hence regulates mannan fibril length; and is important for both immune recognition and virulence. This Candida albicans (strain SC5314 / ATCC MYA-2876) (Yeast) protein is Alpha-1,2-mannosyltransferase MNN23 (MNN23).